Consider the following 409-residue polypeptide: Salivary endonuclease (409 aa).

An N-terminal signal peptide occupies residues 1–20; that stretch reads MHLQLNLCAILLSVLNGIQG. Asparagine 37 and asparagine 102 each carry an N-linked (GlcNAc...) asparagine glycan. Histidine 216 functions as the Proton acceptor in the catalytic mechanism. Asparagine 246 lines the Mg(2+) pocket. N-linked (GlcNAc...) asparagine glycosylation is found at asparagine 351 and asparagine 381.

It belongs to the DNA/RNA non-specific endonuclease family. The cofactor is Mg(2+). In terms of tissue distribution, salivary gland.

Its subcellular location is the secreted. Hydrolyzes single-stranded and double-stranded DNA with little sequence specificity. Inhibits contact pathway of blood coagulation in the host by preventing activation of coagulation factor XII (F12) triggered by soluble DNA. Modestly up-regulates expression of CSF2, CXCL1 and CXCL8 in cultured human dermal microvascular endothelial cells. At higher doses promotes host neutrophil recruitment at the injection site in mouse model. Functionally, (Microbial infection) Increases Leishmania major survival in the host by disrupting parasite-induced neutrophil extracellular traps. Exacerbates L.major parasite infectivity and increases cutaneous lesions in mouse model. This chain is Salivary endonuclease, found in Lutzomyia longipalpis (Sand fly).